A 296-amino-acid chain; its full sequence is Ribosomal protein L11 methyltransferase (296 aa).

Residues threonine 146, glycine 167, aspartate 189, and asparagine 231 each contribute to the S-adenosyl-L-methionine site.

It belongs to the methyltransferase superfamily. PrmA family.

Its subcellular location is the cytoplasm. The enzyme catalyses L-lysyl-[protein] + 3 S-adenosyl-L-methionine = N(6),N(6),N(6)-trimethyl-L-lysyl-[protein] + 3 S-adenosyl-L-homocysteine + 3 H(+). Its function is as follows. Methylates ribosomal protein L11. The chain is Ribosomal protein L11 methyltransferase from Haemophilus influenzae (strain ATCC 51907 / DSM 11121 / KW20 / Rd).